Here is a 397-residue protein sequence, read N- to C-terminus: MLGFLSARQAGLEDPLRLRRAESTRRVLGLELNKDRDVERIHCSGVNTLDIEPVEGRYMLSGGSDGVIVLYDLENSSRQPYYTCKAVCSVGRSHPDVHKYSVETVQWYPHDTGMFTSSSFDKTLKVWDTNTLQIADVFNFEETVYSHHMSPVATKHCLVAVGTRGPKVQLCDLKSGSCSHILQGHRQEILAVSWSPRYEYILATASADSRAKLWDVRRASGCLITLDQHNGKKSQAAESANTAHNGKVNGLCFTSDGLHLLTVGTDNRMRLWNSSNGENTLVNYGKVYNDSRKGLKFTVSSGCSSEFVFVPYGSTIAVYTIYSGEQITMLKGHYKSVDCCVFQSNFQELYSGSRDCNILAWVPSLCESVPDDDDETSTRSQLNPAFEDAWSSSDEEG.

WD repeat units follow at residues 41 to 81 (IHCS…RQPY), 97 to 137 (VHKY…IADV), 184 to 224 (GHRQ…GCLI), 243 to 282 (AHNG…NTLV), and 332 to 371 (GHYK…SVPD). Residues 370–397 (PDDDDETSTRSQLNPAFEDAWSSSDEEG) form a disordered region. Residues S391, S392, and S393 each carry the phosphoserine modification.

Part of the CSA complex (also named DCX(ERCC8) complex), a DCX E3 ubiquitin-protein ligase complex containing ERCC8, RBX1, DDB1 and CUL4A; the CSA complex interacts with RNA polymerase II; upon UV irradiation it interacts with the COP9 signalosome and preferentially with the hyperphosphorylated form of RNA polymerase II. Interacts with ERCC6/CSB (via CIM motif); promoting recruitment to lesion-stalled RNA polymerase II (Pol II). Interacts with KIAA1530/UVSSA. Interacts with a subunit of RNA polymerase II TFIIH.

The protein resides in the nucleus. Its subcellular location is the chromosome. The protein localises to the nucleus matrix. It functions in the pathway protein modification; protein ubiquitination. Its function is as follows. Substrate-recognition component of the CSA complex, a DCX (DDB1-CUL4-X-box) E3 ubiquitin-protein ligase complex, involved in transcription-coupled nucleotide excision repair (TC-NER), a process during which RNA polymerase II-blocking lesions are rapidly removed from the transcribed strand of active genes. Following recruitment to lesion-stalled RNA polymerase II (Pol II), the CSA complex mediates ubiquitination of Pol II subunit POLR2A/RPB1 at 'Lys-1268', a critical TC-NER checkpoint, governing RNA Pol II stability and initiating DNA damage excision by TFIIH recruitment. The CSA complex also promotes the ubiquitination and subsequent proteasomal degradation of ERCC6/CSB in a UV-dependent manner; ERCC6 degradation is essential for the recovery of RNA synthesis after transcription-coupled repair. Also plays a role in DNA double-strand breaks (DSSBs) repair by non-homologous end joining (NHEJ). In Bos taurus (Bovine), this protein is DNA excision repair protein ERCC-8 (ERCC8).